Here is a 90-residue protein sequence, read N- to C-terminus: Cell division topological specificity factor (90 aa).

The protein belongs to the MinE family.

Functionally, prevents the cell division inhibition by proteins MinC and MinD at internal division sites while permitting inhibition at polar sites. This ensures cell division at the proper site by restricting the formation of a division septum at the midpoint of the long axis of the cell. The polypeptide is Cell division topological specificity factor (Francisella philomiragia subsp. philomiragia (strain ATCC 25017 / CCUG 19701 / FSC 153 / O#319-036)).